The following is a 435-amino-acid chain: AP-2 complex subunit mu (435 aa).

Position 45 is a phosphoserine (Ser45). Phosphothreonine is present on Thr156. The 265-residue stretch at 170-434 (RNELFLDVLE…IGRSGIYETR (265 aa)) folds into the MHD domain. The a 1,2-diacyl-sn-glycero-3-phospho-(1D-myo-inositol-3,4,5-trisphosphate) site is built by Lys341, Lys345, and Lys354.

Belongs to the adaptor complexes medium subunit family. Adaptor protein complex 2 (AP-2) is a heterotetramer composed of two large adaptins (alpha-type subunit AP2A1 or AP2A2 and beta-type subunit AP2B1), a medium adaptin (mu-type subunit AP2M1) and a small adaptin (sigma-type subunit AP2S1). Interacts with ATP6V1H and MEGF10. Interacts with EGFR and TTGN1. Interacts with F2R. Interacts with PIP5K1C; tyrosine phosphorylation of PIP5K1C weakens the interaction. Interacts with KIAA0319; required for clathrin-mediated endocytosis of KIAA0319. Interacts with DVL2 (via DEP domain). Interacts with KCNQ1; mediates estrogen-induced internalization via clathrin-coated vesicles. Interacts with P2RX4 (via internalization motif). Together with AP2A1 or AP2A2 and AP2B1, it interacts with ADAM10; this interaction facilitates ADAM10 endocytosis from the plasma membrane during long-term potentiation in hippocampal neurons. Probably interacts with ACE2 (via endocytic sorting signal motif); the interaction is inhibited by ACE2 phosphorylation. Interacts with RALBP1; the interaction is direct. Interacts with TMEM106B (via N-terminus). Post-translationally, phosphorylation at Thr-156 increases the affinity of the AP-2 complex for cargo membrane proteins during the initial stages of endocytosis.

The protein resides in the cell membrane. It is found in the membrane. The protein localises to the coated pit. Functionally, component of the adaptor protein complex 2 (AP-2). Adaptor protein complexes function in protein transport via transport vesicles in different membrane traffic pathways. Adaptor protein complexes are vesicle coat components and appear to be involved in cargo selection and vesicle formation. AP-2 is involved in clathrin-dependent endocytosis in which cargo proteins are incorporated into vesicles surrounded by clathrin (clathrin-coated vesicles, CCVs) which are destined for fusion with the early endosome. The clathrin lattice serves as a mechanical scaffold but is itself unable to bind directly to membrane components. Clathrin-associated adaptor protein (AP) complexes which can bind directly to both the clathrin lattice and to the lipid and protein components of membranes are considered to be the major clathrin adaptors contributing the CCV formation. AP-2 also serves as a cargo receptor to selectively sort the membrane proteins involved in receptor-mediated endocytosis. AP-2 seems to play a role in the recycling of synaptic vesicle membranes from the presynaptic surface. AP-2 recognizes Y-X-X-[FILMV] (Y-X-X-Phi) and [ED]-X-X-X-L-[LI] endocytosis signal motifs within the cytosolic tails of transmembrane cargo molecules. AP-2 may also play a role in maintaining normal post-endocytic trafficking through the ARF6-regulated, non-clathrin pathway. During long-term potentiation in hippocampal neurons, AP-2 is responsible for the endocytosis of ADAM10. The AP-2 mu subunit binds to transmembrane cargo proteins; it recognizes the Y-X-X-Phi motifs. The surface region interacting with to the Y-X-X-Phi motif is inaccessible in cytosolic AP-2, but becomes accessible through a conformational change following phosphorylation of AP-2 mu subunit at Thr-156 in membrane-associated AP-2. The membrane-specific phosphorylation event appears to involve assembled clathrin which activates the AP-2 mu kinase AAK1. Plays a role in endocytosis of frizzled family members upon Wnt signaling. The polypeptide is AP-2 complex subunit mu (AP2M1) (Bos taurus (Bovine)).